A 330-amino-acid polypeptide reads, in one-letter code: Aspartate--ammonia ligase (330 aa).

The protein belongs to the class-II aminoacyl-tRNA synthetase family. AsnA subfamily.

Its subcellular location is the cytoplasm. The catalysed reaction is L-aspartate + NH4(+) + ATP = L-asparagine + AMP + diphosphate + H(+). The protein operates within amino-acid biosynthesis; L-asparagine biosynthesis; L-asparagine from L-aspartate (ammonia route): step 1/1. The chain is Aspartate--ammonia ligase from Escherichia coli O81 (strain ED1a).